The primary structure comprises 512 residues: Chromatin assembly factor 1 subunit B (512 aa).

4 WD repeats span residues 16–56 (DDHT…SSTK), 65–105 (RHTQ…TTLA), 126–165 (SMGS…LLTQ), and 168–207 (DHSH…KNPK). Residues 239–257 (DESSGISEPIETSNNNESP) show a composition bias toward polar residues. A disordered region spans residues 239 to 261 (DESSGISEPIETSNNNESPVSKH). WD repeat units follow at residues 373–413 (SFSN…PFYR) and 417–458 (LHYS…VKSQ). Residues 459-512 (HKISLPEKRSASPSSIDDSQDNTAGGPATTTLIPRKVESSKVSKKRIAPTPVYP) form a disordered region. Phosphoserine occurs at positions 468, 470, and 473. Residues 469 to 490 (ASPSSIDDSQDNTAGGPATTTL) show a composition bias toward polar residues.

The protein belongs to the WD repeat HIR1 family. As to quaternary structure, component of chromatin assembly factor 1 (CAF-1), composed of pcf1, pcf2 and pcf3. Interacts with pcn1/PCNA during S-phase. Interacts with swi6 at the G1/S-phase transition and early S-phase, but not in the G2 phase. The CAF-1 complex interacts with histone H3-H4 dimers.

The protein localises to the cytoplasm. It localises to the nucleus. In terms of biological role, acts as a component of the histone chaperone complex chromatin assembly factor 1 (CAF-1), which assembles histone octamers onto DNA during replication and repair. CAF-1 performs the first step of the nucleosome assembly process, bringing newly synthesized histones H3 and H4 to replicating DNA; histones H2A/H2B can bind to this chromatin precursor subsequent to DNA replication to complete the histone octamer. Plays a role in the maintenance of heterochromatin. The protein is Chromatin assembly factor 1 subunit B of Schizosaccharomyces pombe (strain 972 / ATCC 24843) (Fission yeast).